A 276-amino-acid chain; its full sequence is Probable ABC transporter permease protein NosY (276 aa).

Helical transmembrane passes span 20–40, 55–75, 111–131, 146–166, 179–199, and 251–271; these read WLLA…WLGA, IASL…LLAY, ILAL…ALLV, FMIS…VLSG, LGVW…LLVL, and VLWL…YAIF.

As to quaternary structure, the complex may be composed of an ATP-binding protein (NosF), a transmembrane protein (NosY) and a solute-binding protein (NosD).

It is found in the cell inner membrane. Functionally, required for the assembly of the copper chromophores of nitrous oxide reductase. Could be part of the ABC transporter complex NosDFY. The chain is Probable ABC transporter permease protein NosY from Stutzerimonas stutzeri (Pseudomonas stutzeri).